A 555-amino-acid polypeptide reads, in one-letter code: Inositol 1,4,5-triphosphate receptor associated 2 (555 aa).

Residues 1–495 are Cytoplasmic-facing; it reads MESTPFSGVA…LKSSIRKANK (495 aa). Disordered stretches follow at residues 84-103 and 128-147; these read SLPLPRHTSSTDGTITSSDP and RSASPTIEAQGTSPAHDNIA. Thr-91 carries the post-translational modification Phosphothreonine. The segment covering 91 to 102 has biased composition (low complexity); it reads TSSTDGTITSSD. Positions 129–142 are enriched in polar residues; it reads SASPTIEAQGTSPA. Residues 227–341 are a coiled coil; it reads TLEKRVKLEE…LEELKQVLLQ (115 aa). 3 positions are modified to phosphoserine: Ser-363, Ser-370, and Ser-424. Residues 437–469 form a disordered region; it reads ELKTKDDSEPSGEETVERTRKPSLSEKKNNPSK. Basic and acidic residues predominate over residues 451-465; that stretch reads TVERTRKPSLSEKKN. A helical; Anchor for type IV membrane protein membrane pass occupies residues 496–516; sequence ALWLSIAFIVLFAALMSFLTG. The Lumenal portion of the chain corresponds to 517–555; the sequence is QLFQKSVDAAPTQQEDSWTSLEHILWPFTRLRHNGPPPV.

It belongs to the IRAG2 family. Interacts (via coiled-coil domain) with ITPR3. Interacts with SUN1 and SUN2. Interacts with microtubules. Interacts with HCN4; regulates HCN4 channel activity. The removal of the C-terminal lumenal domain occurs by proteolytic processing. In terms of tissue distribution, expressed at high levels in pre B-cells, mature B-cells and pre T-cells. Expressed at low levels in mature T-cells and plasma B-cells. Expressed in germinal center B-cells, splenic marginal zone cells and B-cell lymphomas. Expressed in neuronal cells in the cerebral cortex, epithelial cells in tonsil, adrenal glands, zymogen-producing cells in the stomach and epithelial cells in seminal vesicles.

Its subcellular location is the cytoplasm. It localises to the endoplasmic reticulum membrane. The protein localises to the nucleus envelope. It is found in the cytoskeleton. The protein resides in the microtubule organizing center. Its subcellular location is the centrosome. It localises to the spindle pole. The protein localises to the chromosome. Functionally, plays a role in the delivery of peptides to major histocompatibility complex (MHC) class I molecules; this occurs in a transporter associated with antigen processing (TAP)-independent manner. May play a role in taste signal transduction via ITPR3. May play a role during fertilization in pronucleus congression and fusion. Plays a role in maintaining nuclear shape, maybe as a component of the LINC complex and through interaction with microtubules. Plays a role in the regulation of cellular excitability by regulating the hyperpolarization-activated cyclic nucleotide-gated HCN4 channel activity. In Homo sapiens (Human), this protein is Inositol 1,4,5-triphosphate receptor associated 2.